Reading from the N-terminus, the 271-residue chain is S-adenosylmethionine decarboxylase proenzyme (271 aa).

The active-site Schiff-base intermediate with substrate; via pyruvic acid is the serine 121. Serine 121 is modified (pyruvic acid (Ser); by autocatalysis). Catalysis depends on histidine 126, which acts as the Proton acceptor; for processing activity. Cysteine 149 functions as the Proton donor; for catalytic activity in the catalytic mechanism.

It belongs to the prokaryotic AdoMetDC family. Type 2 subfamily. As to quaternary structure, heterooctamer of four alpha and four beta chains arranged as a tetramer of alpha/beta heterodimers. Pyruvate serves as cofactor. Post-translationally, is synthesized initially as an inactive proenzyme. Formation of the active enzyme involves a self-maturation process in which the active site pyruvoyl group is generated from an internal serine residue via an autocatalytic post-translational modification. Two non-identical subunits are generated from the proenzyme in this reaction, and the pyruvate is formed at the N-terminus of the alpha chain, which is derived from the carboxyl end of the proenzyme. The post-translation cleavage follows an unusual pathway, termed non-hydrolytic serinolysis, in which the side chain hydroxyl group of the serine supplies its oxygen atom to form the C-terminus of the beta chain, while the remainder of the serine residue undergoes an oxidative deamination to produce ammonia and the pyruvoyl group blocking the N-terminus of the alpha chain.

It catalyses the reaction S-adenosyl-L-methionine + H(+) = S-adenosyl 3-(methylsulfanyl)propylamine + CO2. It participates in amine and polyamine biosynthesis; S-adenosylmethioninamine biosynthesis; S-adenosylmethioninamine from S-adenosyl-L-methionine: step 1/1. Functionally, catalyzes the decarboxylation of S-adenosylmethionine to S-adenosylmethioninamine (dcAdoMet), the propylamine donor required for the synthesis of the polyamines spermine and spermidine from the diamine putrescine. The chain is S-adenosylmethionine decarboxylase proenzyme from Clostridium perfringens (strain SM101 / Type A).